Reading from the N-terminus, the 697-residue chain is Histone deacetylase HOS3 (697 aa).

The interval 40–440 (AKAVVVLSPY…LIGLQNQDWV (401 aa)) is histone deacetylase. The active site involves His-196. A disordered region spans residues 525 to 573 (IRSHRSNASPEKELHENKPRSTEKQEQREIRSDTKVKQLSSNNRAAETQ). Positions 534 to 560 (PEKELHENKPRSTEKQEQREIRSDTKV) are enriched in basic and acidic residues. The segment covering 561–573 (KQLSSNNRAAETQ) has biased composition (polar residues). Phosphoserine occurs at positions 582, 583, 613, and 629. The segment covering 625-638 (GDEDSDHELKEKNW) has biased composition (basic and acidic residues). Residues 625-697 (GDEDSDHELK…KHTTRSGGRW (73 aa)) are disordered. Positions 665 to 674 (QPQNANTPTY) are enriched in polar residues.

Belongs to the histone deacetylase family. HD type 1 subfamily. In terms of assembly, homodimer.

The protein resides in the nucleus. It catalyses the reaction N(6)-acetyl-L-lysyl-[histone] + H2O = L-lysyl-[histone] + acetate. In terms of biological role, responsible for the deacetylation of lysine residues on the N-terminal part of the core histones (H2A, H2B, H3 and H4). Histone deacetylation gives a tag for epigenetic repression and plays an important role in transcriptional regulation, cell cycle progression and developmental events. Histone deacetylases act via the formation of large multiprotein complexes. This Saccharomyces cerevisiae (strain ATCC 204508 / S288c) (Baker's yeast) protein is Histone deacetylase HOS3 (HOS3).